We begin with the raw amino-acid sequence, 544 residues long: Tyrosine-protein kinase fynb (544 aa).

Gly2 carries the N-myristoyl glycine lipid modification. 2 S-palmitoyl cysteine lipidation sites follow: Cys3 and Cys6. Positions 89–150 (TGVTLFVALY…PSNYVAPVDS (62 aa)) constitute an SH3 domain. Positions 156–253 (WYFGKLGRKD…GLCCRLVVPC (98 aa)) constitute an SH2 domain. The Protein kinase domain occupies 278 to 531 (LQLIKRLGNG…YLQAFLEDYF (254 aa)). ATP-binding positions include 284–292 (LGNGQFGEV) and Lys306. The Proton acceptor role is filled by Asp397. Tyr427 carries the phosphotyrosine; by autocatalysis modification. Tyr538 is modified (phosphotyrosine).

It belongs to the protein kinase superfamily. Tyr protein kinase family. SRC subfamily. It depends on Mn(2+) as a cofactor.

It is found in the cytoplasm. The catalysed reaction is L-tyrosyl-[protein] + ATP = O-phospho-L-tyrosyl-[protein] + ADP + H(+). Inhibited by phosphorylation of Tyr-538 by leukocyte common antigen and activated by dephosphorylation of this site. Its function is as follows. Tyrosine-protein kinase implicated in the control of cell growth. Plays a role in the regulation of intracellular calcium levels. Required in brain development and mature brain function with important roles in the regulation of axon growth, axon guidance, and neurite extension. Role in CNTN1-mediated signaling. This Danio rerio (Zebrafish) protein is Tyrosine-protein kinase fynb (fynb).